The sequence spans 621 residues: Acetolactate synthase (621 aa).

Positions 1–19 are enriched in low complexity; that stretch reads MSAPTRRPAPDAPGAAGIA. The disordered stretch occupies residues 1-39; it reads MSAPTRRPAPDAPGAAGIAPAPPAPAAKPAAGKPKRIGP. Glu89 is a binding site for thiamine diphosphate. FAD is bound by residues Arg190, 296–317, and 339–358; these read HGTVAAVAALQRSDLLIALGTR and DIDPAEIGKNRHADVPIVGD. The tract at residues 432–512 is thiamine pyrophosphate binding; that stretch reads HDQMWAAQFI…IKVALINNGN (81 aa). Residues Asp483 and Asn510 each contribute to the Mg(2+) site.

Belongs to the TPP enzyme family. It depends on Mg(2+) as a cofactor. Requires thiamine diphosphate as cofactor.

It carries out the reaction 2 pyruvate + H(+) = (2S)-2-acetolactate + CO2. It functions in the pathway amino-acid biosynthesis; L-isoleucine biosynthesis; L-isoleucine from 2-oxobutanoate: step 1/4. The protein operates within amino-acid biosynthesis; L-valine biosynthesis; L-valine from pyruvate: step 1/4. The sequence is that of Acetolactate synthase (ilvB) from Mycobacterium avium.